The primary structure comprises 413 residues: MEYPNLLPRFLKYVKVNSRSDENSDRFPSTEREENFQKNVIMKDLEELGLSDIHYNQKAGSVIAEIPSNVDYDVPVMGFLAHSDTADFNSENVKPQIHKNYDGESKIQLGDSEFYLDPEVYPNLRKYKGQTIITASGDTLLGADDKCGISELMTFAEYLMNHPEVKHGKIRLAFTPDEEIGTGAEQFDVKDFGADFAFTVDGEAPGKLGDCTFSAAQFTLDIQGVNVHPAVAKGQMINAVQVGIDFHNQLPEHDRPEHTDGREGFFHLLSFDGTVDHAHLAYIIRDFERDGLEERKNLVKSIVKKMNDEFGTERIKLQMNDQYYNMADELKKHMDIVDLARDAYKAEGLEVNEDPVRGGTDGSQLTYMGLPCPNIFAGEENMHGRYEYTVLESMYKTVDVMIKMAELNAERAK.

His-82 lines the Zn(2+) pocket. Asp-84 is an active-site residue. Asp-144 is a Zn(2+) binding site. Catalysis depends on Glu-178, which acts as the Proton acceptor. The Zn(2+) site is built by Glu-179, Asp-201, and His-383.

It belongs to the peptidase M20B family. Homotrimer. Requires Zn(2+) as cofactor.

It is found in the cytoplasm. It carries out the reaction Release of the N-terminal residue from a tripeptide.. With respect to regulation, totally inhibited by EDTA, EGTA, and 1,10-phenanthroline. Strongly inhibited by divalent cations such as Cu(2+), Cd(2+), Co(2+) and Mn(2+). Partially inhibited by the reducing agents 2-mercaptoethanol and dithiothreitol. In terms of biological role, cleaves the N-terminal amino acid of tripeptides. Shows broad substrate specificity, exhibiting maximum activity against hydrophobic tripeptides, with the highest activity for Met-Gly-Gly. Therefore this enzyme may play an important role in flavor formation during cheese ripening. Is also able to slowly hydrolyze some hydrophobic dipeptides, but displays no activity against tetrapeptides and the tripeptide Phe-Gly-Gly. This is Peptidase T (pepT) from Lactobacillus helveticus (Lactobacillus suntoryeus).